The chain runs to 720 residues: Phosphoribosylformylglycinamidine synthase subunit PurL (720 aa).

H47 is an active-site residue. ATP-binding residues include Y50 and K89. Residue E91 coordinates Mg(2+). Residues 92 to 95 (SHNH) and R114 contribute to the substrate site. Residue H93 is the Proton acceptor of the active site. Position 115 (D115) interacts with Mg(2+). Q238 lines the substrate pocket. Residue D266 participates in Mg(2+) binding. 310–312 (ESQ) contributes to the substrate binding site. Residues D488 and G525 each contribute to the ATP site. N526 serves as a coordination point for Mg(2+). Substrate is bound at residue S528.

It belongs to the FGAMS family. Monomer. Part of the FGAM synthase complex composed of 1 PurL, 1 PurQ and 2 PurS subunits.

The protein localises to the cytoplasm. The enzyme catalyses N(2)-formyl-N(1)-(5-phospho-beta-D-ribosyl)glycinamide + L-glutamine + ATP + H2O = 2-formamido-N(1)-(5-O-phospho-beta-D-ribosyl)acetamidine + L-glutamate + ADP + phosphate + H(+). It participates in purine metabolism; IMP biosynthesis via de novo pathway; 5-amino-1-(5-phospho-D-ribosyl)imidazole from N(2)-formyl-N(1)-(5-phospho-D-ribosyl)glycinamide: step 1/2. Functionally, part of the phosphoribosylformylglycinamidine synthase complex involved in the purines biosynthetic pathway. Catalyzes the ATP-dependent conversion of formylglycinamide ribonucleotide (FGAR) and glutamine to yield formylglycinamidine ribonucleotide (FGAM) and glutamate. The FGAM synthase complex is composed of three subunits. PurQ produces an ammonia molecule by converting glutamine to glutamate. PurL transfers the ammonia molecule to FGAR to form FGAM in an ATP-dependent manner. PurS interacts with PurQ and PurL and is thought to assist in the transfer of the ammonia molecule from PurQ to PurL. The protein is Phosphoribosylformylglycinamidine synthase subunit PurL of Cereibacter sphaeroides (strain ATCC 17023 / DSM 158 / JCM 6121 / CCUG 31486 / LMG 2827 / NBRC 12203 / NCIMB 8253 / ATH 2.4.1.) (Rhodobacter sphaeroides).